The sequence spans 223 residues: UPF0319 protein VPA1584 (223 aa).

An N-terminal signal peptide occupies residues 1–21 (MKLIKPLTCALALAMSGMAFA).

It belongs to the UPF0319 family.

This is UPF0319 protein VPA1584 from Vibrio parahaemolyticus serotype O3:K6 (strain RIMD 2210633).